Reading from the N-terminus, the 1464-residue chain is Alpha-glucan water dikinase, chloroplastic (1464 aa).

Residues Met-1 to Ala-77 constitute a chloroplast transit peptide. Catalysis depends on His-1069, which acts as the Tele-phosphohistidine intermediate.

It belongs to the PEP-utilizing enzyme family. In terms of assembly, homodimer. It depends on Mg(2+) as a cofactor. Expressed in leaves.

The protein resides in the plastid. It localises to the chloroplast. It catalyses the reaction [(1-&gt;4)-alpha-D-glucosyl](n) + n ATP + n H2O = [(1-&gt;4)-6-phospho-alpha-D-glucosyl](n) + n AMP + n phosphate + 2n H(+). The catalysed reaction is ATP + protein L-histidine = ADP + protein N-phospho-L-histidine.. In terms of biological role, mediates the incorporation of phosphate into starch-like alpha-glucan, mostly at the C-6 position of glucose units. Acts as an overall regulator of starch mobilization. Required for starch degradation, suggesting that the phosphate content of starch regulates its degradability. More active on alpha-1,6 branched amylopectin. This is Alpha-glucan water dikinase, chloroplastic (R1) from Solanum tuberosum (Potato).